A 579-amino-acid chain; its full sequence is 2-isopropylmalate synthase (579 aa).

The 275-residue stretch at 40 to 314 (PRWCAVDLRD…DPMIDFSDID (275 aa)) folds into the Pyruvate carboxyltransferase domain. Mg(2+) is bound by residues D49, H253, H255, and N289. A regulatory domain region spans residues 456–579 (SDEEQAQWGR…VNRAVRDAQA (124 aa)).

The protein belongs to the alpha-IPM synthase/homocitrate synthase family. LeuA type 2 subfamily. In terms of assembly, homodimer. Mg(2+) is required as a cofactor.

Its subcellular location is the cytoplasm. The catalysed reaction is 3-methyl-2-oxobutanoate + acetyl-CoA + H2O = (2S)-2-isopropylmalate + CoA + H(+). It functions in the pathway amino-acid biosynthesis; L-leucine biosynthesis; L-leucine from 3-methyl-2-oxobutanoate: step 1/4. In terms of biological role, catalyzes the condensation of the acetyl group of acetyl-CoA with 3-methyl-2-oxobutanoate (2-ketoisovalerate) to form 3-carboxy-3-hydroxy-4-methylpentanoate (2-isopropylmalate). The sequence is that of 2-isopropylmalate synthase from Paenarthrobacter aurescens (strain TC1).